A 235-amino-acid chain; its full sequence is Sugar fermentation stimulation protein homolog (235 aa).

It belongs to the SfsA family.

The sequence is that of Sugar fermentation stimulation protein homolog from Allorhizobium ampelinum (strain ATCC BAA-846 / DSM 112012 / S4) (Agrobacterium vitis (strain S4)).